The following is a 415-amino-acid chain: Alpha-N-acetylgalactosaminidase (415 aa).

The N-terminal stretch at 1-17 (MLQKTVLLLALVAQVLM) is a signal peptide. 3 disulfides stabilise this stretch: cysteine 38–cysteine 80, cysteine 42–cysteine 49, and cysteine 127–cysteine 158. Substrate is bound by residues 78–79 (DD) and lysine 154. The active-site Nucleophile is aspartate 156. Asparagine 177 is a glycosylation site (N-linked (GlcNAc...) asparagine). Cysteine 187 and cysteine 209 are oxidised to a cystine. Serine 188 is a substrate binding site. The N-linked (GlcNAc...) asparagine glycan is linked to asparagine 201. 2 residues coordinate substrate: arginine 213 and aspartate 217. Aspartate 217 functions as the Proton donor in the catalytic mechanism. Phosphoserine is present on residues serine 322 and serine 332. N-linked (GlcNAc...) asparagine glycosylation occurs at asparagine 385.

Belongs to the glycosyl hydrolase 27 family. As to quaternary structure, homodimer.

The protein resides in the lysosome. The enzyme catalyses Cleavage of non-reducing alpha-(1-&gt;3)-N-acetylgalactosamine residues from human blood group A and AB mucin glycoproteins, Forssman hapten and blood group A lacto series glycolipids.. It catalyses the reaction a neolactoside IV(3)-alpha-GalNAc,IV(2)-alpha-Fuc-nLc4Cer(d18:1(4E)) + H2O = a neolactoside IV(2)-alpha-Fuc-nLc4Cer(d18:1(4E)) + N-acetyl-alpha-D-galactosamine. The catalysed reaction is a neolactoside IV(3)-alpha-GalNAc,IV(2)-alpha-Fuc-nLc4Cer(d18:0) + H2O = a neolactoside IV(2)-alpha-Fuc-nLc4Cer(d18:0) + N-acetyl-alpha-D-galactosamine. It carries out the reaction a globoside IV3GalNAc-Gb4Cer + H2O = N-acetyl-alpha-D-galactosamine + a globoside Gb4Cer. Functionally, removes terminal alpha-N-acetylgalactosamine residues from glycolipids and glycopeptides. Required for the breakdown of glycolipids. The chain is Alpha-N-acetylgalactosaminidase (Naga) from Mus musculus (Mouse).